The primary structure comprises 413 residues: 2,3-bisphosphoglycerate-independent phosphoglycerate mutase (413 aa).

Belongs to the BPG-independent phosphoglycerate mutase family. A-PGAM subfamily.

The catalysed reaction is (2R)-2-phosphoglycerate = (2R)-3-phosphoglycerate. It functions in the pathway carbohydrate degradation; glycolysis; pyruvate from D-glyceraldehyde 3-phosphate: step 3/5. In terms of biological role, catalyzes the interconversion of 2-phosphoglycerate and 3-phosphoglycerate. The protein is 2,3-bisphosphoglycerate-independent phosphoglycerate mutase of Metallosphaera sedula (strain ATCC 51363 / DSM 5348 / JCM 9185 / NBRC 15509 / TH2).